Consider the following 167-residue polypeptide: CGG triplet repeat-binding protein 1 (167 aa).

A Phosphoserine modification is found at Ser-56. A disordered region spans residues 65-86 (KTHTKRKAEFEEQNVRKKQRPL). The Nuclear localization signal motif lies at 80-84 (RKKQR). Position 164 is a phosphoserine (Ser-164).

The protein resides in the nucleus. Binds to nonmethylated 5'-d(CGG)(n)-3' trinucleotide repeats in the FMR1 promoter. May play a role in regulating FMR1 promoter. This chain is CGG triplet repeat-binding protein 1 (Cggbp1), found in Mus musculus (Mouse).